The following is a 725-amino-acid chain: MKLSLILSIALCSTRVVYAAGAEAPRISRNTVKLHSYNESRVCRHDESSNQTVSHAAMFTFNFQDGDGYRVYQVPRCLFNTHAAREVLSSVDMTETLESYRKRFRVYFVVPIYGAYRLVARSPTAKYPGGVLNPPPASSVTMQDLIVDATNIHTVVPDKLCVITEHPVIFSMKVPCSHQVITWTGYTVTVSLAQKFFVLTIKPTRDHTSENTLAMFFGDVREVDLKAPYTVGAFLLRQTPDHDLLVVVKQTAFIQRYMFLTDVVFLQRTLSADYADTSVCLRVLSVLASVVARGKQCGLITRDTVEFFFTYSLCQLMANGTRYQSTAPVSTALWRQSELELFGEFIRHCFKTTTPNPTPAFQTRMQLTEKHKPAHSSNAIDVRVLAATYSSGMHAASMADLAFLLRSTRIPPNVNTDALLQKLLFTTDAYYRMSLKIPLSGSMRRILIRVDLTVRTQLNESSVARRHFVLLTSMCSPREQISWGELLMNPQRGAPSEIYSPCVSGGRRDYTGPSVRALMESAHRPERRAEQVMSVTEALRPKRSQMSDEANCVPDSTQGAVITANEKTYLISSDFIVKGLAIPVSNTVVDRNLMITVLDRRSPCVLSRSYRERGSVIVMNNITFTERCEFCASTLVEYDEVDGLTSIMHIPSIEVLKYLTDPENDILVATPRVHYLLLTANGTVFEVTDILVNVRPSMPYSVVVALVIIAILMALGLYRLCRQKR.

Positions 1–19 are cleaved as a signal peptide; sequence MKLSLILSIALCSTRVVYA. Residues 20-700 are Virion surface-facing; it reads AGAEAPRISR…LVNVRPSMPY (681 aa). Residues Asn38 and Asn50 are each glycosylated (N-linked (GlcNAc...) asparagine; by host). The tract at residues 184–247 is interaction with gL; it reads TGYTVTVSLA…QTPDHDLLVV (64 aa). Asn319, Asn459, Asn621, and Asn681 each carry an N-linked (GlcNAc...) asparagine; by host glycan. The helical transmembrane segment at 701 to 721 threads the bilayer; sequence SVVVALVIIAILMALGLYRLC. Topologically, residues 722–725 are intravirion; it reads RQKR.

This sequence belongs to the herpesviridae glycoprotein H family. In terms of assembly, interacts with glycoprotein L (gL); this interaction is necessary for the correct processing and cell surface expression of gH. The heterodimer gH/gL seems to interact with gB trimers during fusion. Post-translationally, N-glycosylated, O-glycosylated, and sialylated.

It is found in the virion membrane. The protein localises to the host cell membrane. It localises to the host endosome membrane. Functionally, the heterodimer glycoprotein H-glycoprotein L is required for the fusion of viral and plasma membranes leading to virus entry into the host cell. Following initial binding to host receptor, membrane fusion is mediated by the fusion machinery composed of gB and the heterodimer gH/gL. May also be involved in the fusion between the virion envelope and the outer nuclear membrane during virion morphogenesis. The sequence is that of Envelope glycoprotein H from Murid herpesvirus 1 (strain Smith) (MuHV-1).